A 406-amino-acid polypeptide reads, in one-letter code: Vitamin D3 dihydroxylase (406 aa).

Residues 1-15 show a composition bias toward low complexity; it reads MTDTATTPQTTDAPA. Positions 1 to 24 are disordered; that stretch reads MTDTATTPQTTDAPAFPSNRSCPY. Thr-81 contributes to the calciol binding site. The heme site is built by His-103 and Arg-107. The calciol site is built by Arg-193, Ser-236, and Ile-293. Heme contacts are provided by Arg-297, His-353, and Cys-355.

This sequence belongs to the cytochrome P450 family. Heme is required as a cofactor.

It is found in the cytoplasm. It carries out the reaction calciol + 2 reduced [2Fe-2S]-[ferredoxin] + O2 + 2 H(+) = calcidiol + 2 oxidized [2Fe-2S]-[ferredoxin] + H2O. It catalyses the reaction calcidiol + 2 reduced [2Fe-2S]-[ferredoxin] + O2 + 2 H(+) = calcitriol + 2 oxidized [2Fe-2S]-[ferredoxin] + H2O. Its function is as follows. Involved in the metabolism of vitamin D3 (calciol) and of a number of sulfonylurea herbicides. Catalyzes the two-step hydroxylation (25- and 1-alpha-hydroxylation) of vitamin D3 (VD3) to yield its active form 1-alpha,25-dihydroxyvitamin D3 (calcitriol). The first step is the hydroxylation of the C-25 position of VD3 to produce 25-hydroxyvitamin D3 (calcidiol). The second reaction is the hydroxylation of the C1-alpha-position of calcidiol to produce calcitriol. It can also hydroxylate vitamin D2. This chain is Vitamin D3 dihydroxylase, found in Streptomyces griseolus.